A 118-amino-acid chain; its full sequence is Protein yippee-like 1 (118 aa).

The region spanning 19–116 is the Yippee domain; the sequence is RTYSCIHCRA…IELAHMIKDN (98 aa). Zn(2+)-binding residues include cysteine 23, cysteine 26, cysteine 79, and cysteine 82. The Nuclear localization signal motif lies at 99–104; that stretch reads KYKEGK.

It belongs to the yippee family.

The protein localises to the nucleus. In terms of biological role, may play a role in epithelioid conversion of fibroblasts. The sequence is that of Protein yippee-like 1 (Ypel1) from Mus musculus (Mouse).